A 445-amino-acid polypeptide reads, in one-letter code: Enolase (445 aa).

2 residues coordinate substrate: histidine 165 and glutamate 174. Glutamate 217 (proton donor) is an active-site residue. The Mg(2+) site is built by aspartate 252, glutamate 303, and aspartate 330. Substrate is bound by residues glutamate 303 and aspartate 330. The active-site Proton acceptor is the lysine 355. Substrate-binding positions include 382-385 (SHRS) and lysine 406.

Belongs to the enolase family. Homodimer. It depends on Mg(2+) as a cofactor.

It is found in the cytoplasm. It carries out the reaction (2R)-2-phosphoglycerate = phosphoenolpyruvate + H2O. The protein operates within carbohydrate degradation; glycolysis; pyruvate from D-glyceraldehyde 3-phosphate: step 4/5. The polypeptide is Enolase (ENO) (Eimeria tenella (Coccidian parasite)).